The primary structure comprises 751 residues: Trehalose phosphorylase (751 aa).

A propeptide spanning residues 1–26 (MSTPHHQFESKSSTAIRRRLSSSVSS) is cleaved from the precursor. The segment at 1 to 28 (MSTPHHQFESKSSTAIRRRLSSSVSSKQ) is disordered.

Belongs to the glycosyltransferase group 1 family. Glycosyltransferase 4 subfamily. In terms of assembly, homodimer. In terms of tissue distribution, expressed in mycelia, stipes and pilei.

The catalysed reaction is alpha,alpha-trehalose + phosphate = alpha-D-glucose + alpha-D-glucose 1-phosphate. Its function is as follows. Reversibly catalyzes the synthesis and degradation of trehalose from glucose and alpha-D-glucose 1-phosphate. The equilibrium lies in the direction of trehalose synthesis. In Pleurotus sajor-caju (Oyster mushroom), this protein is Trehalose phosphorylase.